We begin with the raw amino-acid sequence, 137 residues long: Protein ApaG (137 aa).

The ApaG domain occupies proline 2–glutamine 126.

This chain is Protein ApaG, found in Acidovorax sp. (strain JS42).